We begin with the raw amino-acid sequence, 264 residues long: Glutamate racemase (264 aa).

Substrate contacts are provided by residues 10-11 (DS) and 42-43 (YG). Cys73 (proton donor/acceptor) is an active-site residue. 74–75 (NT) contacts substrate. Catalysis depends on Cys183, which acts as the Proton donor/acceptor. Residue 184 to 185 (TH) coordinates substrate.

The protein belongs to the aspartate/glutamate racemases family.

The enzyme catalyses L-glutamate = D-glutamate. It functions in the pathway cell wall biogenesis; peptidoglycan biosynthesis. Its function is as follows. Provides the (R)-glutamate required for cell wall biosynthesis. The protein is Glutamate racemase of Streptococcus pneumoniae (strain ATCC BAA-255 / R6).